We begin with the raw amino-acid sequence, 89 residues long: Small ribosomal subunit protein uS15 (89 aa).

It belongs to the universal ribosomal protein uS15 family. As to quaternary structure, part of the 30S ribosomal subunit. Forms a bridge to the 50S subunit in the 70S ribosome, contacting the 23S rRNA.

Functionally, one of the primary rRNA binding proteins, it binds directly to 16S rRNA where it helps nucleate assembly of the platform of the 30S subunit by binding and bridging several RNA helices of the 16S rRNA. In terms of biological role, forms an intersubunit bridge (bridge B4) with the 23S rRNA of the 50S subunit in the ribosome. This is Small ribosomal subunit protein uS15 from Oceanobacillus iheyensis (strain DSM 14371 / CIP 107618 / JCM 11309 / KCTC 3954 / HTE831).